The chain runs to 378 residues: Manganese peroxidase 1 (378 aa).

Positions 1–21 are cleaved as a signal peptide; it reads MAFKSLIAFVALAAAVRAAPT. Disulfide bonds link cysteine 24-cysteine 36, cysteine 35-cysteine 310, cysteine 54-cysteine 138, cysteine 274-cysteine 340, and cysteine 362-cysteine 369. Mn(2+) contacts are provided by glutamate 56 and glutamate 60. Histidine 67 functions as the Proton acceptor in the catalytic mechanism. Positions 68, 83, 85, and 87 each coordinate Ca(2+). N-linked (GlcNAc...) asparagine glycosylation is found at asparagine 97 and asparagine 152. Histidine 194 serves as a coordination point for heme b. Serine 195 provides a ligand contact to Ca(2+). Mn(2+) is bound at residue aspartate 200. 4 residues coordinate Ca(2+): aspartate 212, threonine 214, threonine 217, and aspartate 219. Asparagine 238 carries an N-linked (GlcNAc...) asparagine glycan.

Belongs to the peroxidase family. Ligninase subfamily. Requires Ca(2+) as cofactor. It depends on heme b as a cofactor.

It is found in the secreted. It carries out the reaction 2 Mn(2+) + H2O2 + 2 H(+) = 2 Mn(3+) + 2 H2O. Catalyzes the oxidation of Mn(2+) to Mn(3+). The latter, acting as a diffusible redox mediator, is capable of oxidizing a variety of lignin compounds. The protein is Manganese peroxidase 1 (MNP1) of Phanerodontia chrysosporium (White-rot fungus).